The primary structure comprises 218 residues: Probable nicotinate-nucleotide adenylyltransferase (218 aa).

It belongs to the NadD family.

It carries out the reaction nicotinate beta-D-ribonucleotide + ATP + H(+) = deamido-NAD(+) + diphosphate. The protein operates within cofactor biosynthesis; NAD(+) biosynthesis; deamido-NAD(+) from nicotinate D-ribonucleotide: step 1/1. In terms of biological role, catalyzes the reversible adenylation of nicotinate mononucleotide (NaMN) to nicotinic acid adenine dinucleotide (NaAD). The sequence is that of Probable nicotinate-nucleotide adenylyltransferase from Burkholderia lata (strain ATCC 17760 / DSM 23089 / LMG 22485 / NCIMB 9086 / R18194 / 383).